The following is a 670-amino-acid chain: tRNA 5-methylaminomethyl-2-thiouridine biosynthesis bifunctional protein MnmC (670 aa).

The tract at residues 1 to 242 (MTFSVQHAEI…KRECLSGLKI (242 aa)) is tRNA (mnm(5)s(2)U34)-methyltransferase. Residues 269 to 670 (IGGGIASLCA…KKWLKGSKVE (402 aa)) are FAD-dependent cmnm(5)s(2)U34 oxidoreductase.

The protein in the N-terminal section; belongs to the methyltransferase superfamily. tRNA (mnm(5)s(2)U34)-methyltransferase family. This sequence in the C-terminal section; belongs to the DAO family. FAD is required as a cofactor.

It is found in the cytoplasm. It catalyses the reaction 5-aminomethyl-2-thiouridine(34) in tRNA + S-adenosyl-L-methionine = 5-methylaminomethyl-2-thiouridine(34) in tRNA + S-adenosyl-L-homocysteine + H(+). In terms of biological role, catalyzes the last two steps in the biosynthesis of 5-methylaminomethyl-2-thiouridine (mnm(5)s(2)U) at the wobble position (U34) in tRNA. Catalyzes the FAD-dependent demodification of cmnm(5)s(2)U34 to nm(5)s(2)U34, followed by the transfer of a methyl group from S-adenosyl-L-methionine to nm(5)s(2)U34, to form mnm(5)s(2)U34. This Haemophilus influenzae (strain PittEE) protein is tRNA 5-methylaminomethyl-2-thiouridine biosynthesis bifunctional protein MnmC.